The sequence spans 396 residues: Protein-export membrane protein SecD (396 aa).

The next 6 helical transmembrane spans lie at 12-32 (ILIL…KGLD), 243-263 (LKGT…IVSI), 272-292 (IPIL…ASLI), 298-318 (LPSI…QIVI), 338-358 (FFII…LFVL), and 360-380 (VGML…GIFI).

The protein belongs to the SecD/SecF family. SecD subfamily. Part of the protein translocation apparatus. Forms a complex with SecF.

The protein localises to the cell membrane. Its function is as follows. Involved in protein export. The protein is Protein-export membrane protein SecD of Methanocaldococcus jannaschii (strain ATCC 43067 / DSM 2661 / JAL-1 / JCM 10045 / NBRC 100440) (Methanococcus jannaschii).